The following is an 894-amino-acid chain: DNA mismatch repair protein MutS (894 aa).

632-639 (GPNMGGKS) is a binding site for ATP.

Belongs to the DNA mismatch repair MutS family.

Functionally, this protein is involved in the repair of mismatches in DNA. It is possible that it carries out the mismatch recognition step. This protein has a weak ATPase activity. The polypeptide is DNA mismatch repair protein MutS (Paraburkholderia phytofirmans (strain DSM 17436 / LMG 22146 / PsJN) (Burkholderia phytofirmans)).